The following is a 302-amino-acid chain: Ornithine carbamoyltransferase (302 aa).

Carbamoyl phosphate is bound by residues 47–50 (STRT), Gln74, Arg98, and 125–128 (HPCQ). L-ornithine is bound by residues Asn156, Asp220, and 224–225 (SM). Carbamoyl phosphate contacts are provided by residues 260–261 (CL) and Arg288.

This sequence belongs to the aspartate/ornithine carbamoyltransferase superfamily. OTCase family.

The protein localises to the cytoplasm. It catalyses the reaction carbamoyl phosphate + L-ornithine = L-citrulline + phosphate + H(+). It functions in the pathway amino-acid biosynthesis; L-arginine biosynthesis; L-arginine from L-ornithine and carbamoyl phosphate: step 1/3. Reversibly catalyzes the transfer of the carbamoyl group from carbamoyl phosphate (CP) to the N(epsilon) atom of ornithine (ORN) to produce L-citrulline. This Methanosphaera stadtmanae (strain ATCC 43021 / DSM 3091 / JCM 11832 / MCB-3) protein is Ornithine carbamoyltransferase.